Here is a 369-residue protein sequence, read N- to C-terminus: 4-hydroxy-3-methylbut-2-en-1-yl diphosphate synthase (flavodoxin) (369 aa).

Cysteine 270, cysteine 273, cysteine 305, and glutamate 312 together coordinate [4Fe-4S] cluster.

It belongs to the IspG family. The cofactor is [4Fe-4S] cluster.

The catalysed reaction is (2E)-4-hydroxy-3-methylbut-2-enyl diphosphate + oxidized [flavodoxin] + H2O + 2 H(+) = 2-C-methyl-D-erythritol 2,4-cyclic diphosphate + reduced [flavodoxin]. Its pathway is isoprenoid biosynthesis; isopentenyl diphosphate biosynthesis via DXP pathway; isopentenyl diphosphate from 1-deoxy-D-xylulose 5-phosphate: step 5/6. Converts 2C-methyl-D-erythritol 2,4-cyclodiphosphate (ME-2,4cPP) into 1-hydroxy-2-methyl-2-(E)-butenyl 4-diphosphate. The polypeptide is 4-hydroxy-3-methylbut-2-en-1-yl diphosphate synthase (flavodoxin) (Pseudomonas putida (strain ATCC 47054 / DSM 6125 / CFBP 8728 / NCIMB 11950 / KT2440)).